The following is a 271-amino-acid chain: Aminodeoxychorismate lyase (271 aa).

Lys140 is subject to N6-(pyridoxal phosphate)lysine.

It belongs to the class-IV pyridoxal-phosphate-dependent aminotransferase family. In terms of assembly, homodimer. Pyridoxal 5'-phosphate is required as a cofactor.

The catalysed reaction is 4-amino-4-deoxychorismate = 4-aminobenzoate + pyruvate + H(+). The protein operates within cofactor biosynthesis; tetrahydrofolate biosynthesis; 4-aminobenzoate from chorismate: step 2/2. Involved in the biosynthesis of p-aminobenzoate (PABA), a precursor of tetrahydrofolate. Converts 4-amino-4-deoxychorismate into 4-aminobenzoate (PABA) and pyruvate. In Vibrio harveyi (Beneckea harveyi), this protein is Aminodeoxychorismate lyase (pabC).